The sequence spans 291 residues: Probable 2-(5''-triphosphoribosyl)-3'-dephosphocoenzyme-A synthase (291 aa).

This sequence belongs to the CitG/MdcB family.

The catalysed reaction is 3'-dephospho-CoA + ATP = 2'-(5''-triphospho-alpha-D-ribosyl)-3'-dephospho-CoA + adenine. Its function is as follows. Involved in the formation of 2-(5''-phosphoribosyl)-3'-dephosphocoenzyme-A, the prosthetic group of the acyl-carrier protein of the malonate decarboxylase. This is Probable 2-(5''-triphosphoribosyl)-3'-dephosphocoenzyme-A synthase from Pseudomonas fluorescens (strain ATCC BAA-477 / NRRL B-23932 / Pf-5).